Reading from the N-terminus, the 567-residue chain is ERO1-like protein 2 (567 aa).

The signal sequence occupies residues methionine 1–cysteine 22. Asparagine 49 carries an N-linked (GlcNAc...) asparagine glycan. 4 cysteine pairs are disulfide-bonded: cysteine 88-cysteine 386, cysteine 98-cysteine 103, cysteine 154-cysteine 325, and cysteine 389-cysteine 392. Residues arginine 188, threonine 190, tryptophan 201, serine 258, histidine 261, and lysine 290 each contribute to the FAD site. Cysteine 389 (nucleophile) is an active-site residue. The active site involves cysteine 392. Asparagine 546 carries an N-linked (GlcNAc...) asparagine glycan.

Belongs to the EROs family. May function both as a monomer and a homodimer. Requires FAD as cofactor. In terms of processing, N-glycosylated.

It is found in the endoplasmic reticulum membrane. Essential oxidoreductase that oxidizes proteins in the endoplasmic reticulum to produce disulfide bonds. Acts by oxidizing directly pdi1 isomerase through a direct disulfide exchange. Does not act as a direct oxidant of folding substrate, but relies on pdi1 to transfer oxidizing equivalent. Does not oxidize all pdi related proteins, suggesting that it can discriminate between pdi1 and related proteins. Its reoxidation probably involves electron transfer to molecular oxygen via FAD. Acts independently of glutathione. May be responsible for a significant proportion of reactive oxygen species (ROS) in the cell, thereby being a source of oxidative stress. The sequence is that of ERO1-like protein 2 (ero12) from Schizosaccharomyces pombe (strain 972 / ATCC 24843) (Fission yeast).